The sequence spans 467 residues: Light-independent protochlorophyllide reductase subunit N (467 aa).

Residues cysteine 23, cysteine 48, and cysteine 108 each coordinate [4Fe-4S] cluster.

Belongs to the BchN/ChlN family. As to quaternary structure, protochlorophyllide reductase is composed of three subunits; ChlL, ChlN and ChlB. Forms a heterotetramer of two ChlB and two ChlN subunits. It depends on [4Fe-4S] cluster as a cofactor.

The enzyme catalyses chlorophyllide a + oxidized 2[4Fe-4S]-[ferredoxin] + 2 ADP + 2 phosphate = protochlorophyllide a + reduced 2[4Fe-4S]-[ferredoxin] + 2 ATP + 2 H2O. The protein operates within porphyrin-containing compound metabolism; chlorophyll biosynthesis (light-independent). In terms of biological role, component of the dark-operative protochlorophyllide reductase (DPOR) that uses Mg-ATP and reduced ferredoxin to reduce ring D of protochlorophyllide (Pchlide) to form chlorophyllide a (Chlide). This reaction is light-independent. The NB-protein (ChlN-ChlB) is the catalytic component of the complex. The chain is Light-independent protochlorophyllide reductase subunit N from Trichormus variabilis (strain ATCC 29413 / PCC 7937) (Anabaena variabilis).